Here is a 674-residue protein sequence, read N- to C-terminus: Nucleoporin NDC1 (674 aa).

Over 1 to 24 (MATAVSRPCAGRSRDILWRVLGWR) the chain is Cytoplasmic. A helical transmembrane segment spans residues 25 to 45 (IVASIVWSVLFLPICTTVFII). Residues 46–68 (FSRIDLFHPIQWLSDSFSDLYSS) lie on the Perinuclear space side of the membrane. A helical transmembrane segment spans residues 69–89 (YVIFYFLLLSVVIIIISIFNV). The Cytoplasmic segment spans residues 90-114 (EFYAVVPSIPCSRLALIGKIIHPQQ). The helical transmembrane segment at 115–135 (LMHSFIHAAMGMVMAWCAAVI) threads the bilayer. Over 136 to 165 (TQGQYSFLVVPCTGTNSFGSPAAQTCLNEY) the chain is Perinuclear space. Residues 166–186 (HLFFLLTGAFMGYSYSLLYFV) traverse the membrane as a helical segment. Topologically, residues 187–225 (NNMNYLPFPIIQQYKFLRFRRSLLLLVKHSCVESLFLVR) are cytoplasmic. The chain crosses the membrane as a helical span at residues 226 to 246 (NFCILYYFLGYIPKAWISTAM). Residues 247-272 (NLHIDEQVHRPLDTVSGLLNLSLLYH) lie on the Perinuclear space side of the membrane. Residues 273–293 (VWLCGVFLLTTWYVSWILFKI) traverse the membrane as a helical segment. Residues 294 to 674 (YATEAHVFPV…RLQQFLEFKE (381 aa)) are Cytoplasmic-facing. The interval 394-425 (SSSYPVEPKKLNSPEETAFQTPKSSQMPRPSV) is disordered. At serine 406 the chain carries Phosphoserine. A compositionally biased stretch (polar residues) spans 407 to 421 (PEETAFQTPKSSQMP). Threonine 414 is modified (phosphothreonine). Residue serine 439 is modified to Phosphoserine. Threonine 440 is modified (phosphothreonine). Serine 445 carries the post-translational modification Phosphoserine. Threonine 449 carries the post-translational modification Phosphothreonine. Serine 471 and serine 474 each carry phosphoserine.

It belongs to the NDC1 family. In terms of assembly, interacts with the NUP35/NUP53. Interacts with AAAS, anchoring it to the nuclear envelope.

The protein resides in the nucleus. Its subcellular location is the nuclear pore complex. It is found in the nucleus membrane. Component of the nuclear pore complex (NPC), which plays a key role in de novo assembly and insertion of NPC in the nuclear envelope. Required for NPC and nuclear envelope assembly, possibly by forming a link between the nuclear envelope membrane and soluble nucleoporins, thereby anchoring the NPC in the membrane. This is Nucleoporin NDC1 (NDC1) from Homo sapiens (Human).